We begin with the raw amino-acid sequence, 190 residues long: Protein GrpE (190 aa).

Belongs to the GrpE family. In terms of assembly, homodimer.

Its subcellular location is the cytoplasm. In terms of biological role, participates actively in the response to hyperosmotic and heat shock by preventing the aggregation of stress-denatured proteins, in association with DnaK and GrpE. It is the nucleotide exchange factor for DnaK and may function as a thermosensor. Unfolded proteins bind initially to DnaJ; upon interaction with the DnaJ-bound protein, DnaK hydrolyzes its bound ATP, resulting in the formation of a stable complex. GrpE releases ADP from DnaK; ATP binding to DnaK triggers the release of the substrate protein, thus completing the reaction cycle. Several rounds of ATP-dependent interactions between DnaJ, DnaK and GrpE are required for fully efficient folding. In Streptococcus agalactiae serotype III (strain NEM316), this protein is Protein GrpE.